A 39-amino-acid chain; its full sequence is Pro-opiomelanocortin (39 aa).

Val13 is subject to Valine amide.

Belongs to the POMC family.

It is found in the secreted. Functionally, precursor protein for pituitary hormones that regulate stress and environmental adaptation. Stimulates the adrenal glands to release cortisol. In terms of biological role, anorexigenic peptide. Increases the pigmentation of skin by increasing melanin production in melanocytes. The protein is Pro-opiomelanocortin (POMC) of Struthio camelus (Common ostrich).